The sequence spans 287 residues: Small ribosomal subunit protein uS2 (287 aa).

A compositionally biased stretch (low complexity) spans 254 to 277; it reads LASATASATPSATASTTALTDAPA. Positions 254–287 are disordered; it reads LASATASATPSATASTTALTDAPAGATEPTTDAS.

It belongs to the universal ribosomal protein uS2 family.

This is Small ribosomal subunit protein uS2 (rpsB) from Mycobacterium tuberculosis (strain CDC 1551 / Oshkosh).